The primary structure comprises 419 residues: MHKLIIHGGTPLKGSINISGAKNAVLPIMAASILTDKLHITNVPKLTDVSTMKDLLRSHGADIEIIEHQDEFELIIDTKNINNFTADYEIVRKMRASIWVLGPLLTKYGKAKVSLPGGCAIGARQVDLHIAVLKAMGAEIEIEDGYINASSKGRLKGPHFVFDKVSVGATINAILAAVLAEGETVLFNCGREPEIVDLCNCLITMGADIAGIGTSEITIKGKDSLNKASYKVLSDRIEAGTYMFAAAITKGDVKICGIDYHIVENIALKLIETGIKVVPINNGVQVTYEGKLNSVDLETNPYPGFATDLQAQFMSLMTLSSGVSMITENIFENRFMHVPELCRMGADIVVRGNKAVVRGVEMLKGAEVMASDLRASVSLILAGLSTNSKTVLHRIYHLDRGFQDLEKKLSNCGADIKRV.

A phosphoenolpyruvate-binding site is contributed by 22–23 (KN). Arg95 provides a ligand contact to UDP-N-acetyl-alpha-D-glucosamine. Residue Cys119 is the Proton donor of the active site. A 2-(S-cysteinyl)pyruvic acid O-phosphothioketal modification is found at Cys119. Residues 164 to 167 (KVSV), Asp308, and Ile330 each bind UDP-N-acetyl-alpha-D-glucosamine.

This sequence belongs to the EPSP synthase family. MurA subfamily.

The protein resides in the cytoplasm. The catalysed reaction is phosphoenolpyruvate + UDP-N-acetyl-alpha-D-glucosamine = UDP-N-acetyl-3-O-(1-carboxyvinyl)-alpha-D-glucosamine + phosphate. It functions in the pathway cell wall biogenesis; peptidoglycan biosynthesis. Its function is as follows. Cell wall formation. Adds enolpyruvyl to UDP-N-acetylglucosamine. This is UDP-N-acetylglucosamine 1-carboxyvinyltransferase from Rickettsia peacockii (strain Rustic).